The following is a 316-amino-acid chain: tRNA selenocysteine 1-associated protein 1-like (316 aa).

RRM domains follow at residues 6-89 (TSLW…YATY) and 99-178 (FSVF…IAVN). Residues 239–248 (PPMGMPPMPP) are compositionally biased toward pro residues. The disordered stretch occupies residues 239–285 (PPMGMPPMPPDMQGSTEAHDGTEEVEEDPSEDPNPQVDVEELNRQYM).

It belongs to the RRM TRSPAP family.

The protein localises to the nucleus. Its subcellular location is the cytoplasm. Functionally, involved in the early steps of selenocysteine biosynthesis and tRNA(Sec) charging to the later steps resulting in the cotranslational incorporation of selenocysteine into selenoproteins. The protein is tRNA selenocysteine 1-associated protein 1-like (trnau1apl) of Danio rerio (Zebrafish).